A 509-amino-acid polypeptide reads, in one-letter code: ATP synthase subunit alpha (509 aa).

ATP is bound at residue 169 to 176; the sequence is GDRQTGKT.

It belongs to the ATPase alpha/beta chains family. In terms of assembly, F-type ATPases have 2 components, CF(1) - the catalytic core - and CF(0) - the membrane proton channel. CF(1) has five subunits: alpha(3), beta(3), gamma(1), delta(1), epsilon(1). CF(0) has three main subunits: a(1), b(2) and c(9-12). The alpha and beta chains form an alternating ring which encloses part of the gamma chain. CF(1) is attached to CF(0) by a central stalk formed by the gamma and epsilon chains, while a peripheral stalk is formed by the delta and b chains.

It localises to the cell inner membrane. The enzyme catalyses ATP + H2O + 4 H(+)(in) = ADP + phosphate + 5 H(+)(out). In terms of biological role, produces ATP from ADP in the presence of a proton gradient across the membrane. The alpha chain is a regulatory subunit. The protein is ATP synthase subunit alpha of Sinorhizobium fredii (strain NBRC 101917 / NGR234).